The primary structure comprises 391 residues: Phosphoglycerate kinase (391 aa).

Substrate is bound by residues 21 to 23 (DLN), R36, 59 to 62 (HLGR), R113, and R146. Residues K197, E319, and 345-348 (GGDT) contribute to the ATP site.

It belongs to the phosphoglycerate kinase family. Monomer.

It is found in the cytoplasm. The catalysed reaction is (2R)-3-phosphoglycerate + ATP = (2R)-3-phospho-glyceroyl phosphate + ADP. It functions in the pathway carbohydrate degradation; glycolysis; pyruvate from D-glyceraldehyde 3-phosphate: step 2/5. The chain is Phosphoglycerate kinase from Shewanella putrefaciens (strain CN-32 / ATCC BAA-453).